Consider the following 268-residue polypeptide: Nickel import ATP-binding protein NikE (268 aa).

The region spanning 4–252 (LNISGLSHHY…SSDAGRVLQN (249 aa)) is the ABC transporter domain. ATP is bound at residue 45 to 52 (GRSGCGKS).

The protein belongs to the ABC transporter superfamily. Nickel importer (TC 3.A.1.5.3) family. The complex is composed of two ATP-binding proteins (NikD and NikE), two transmembrane proteins (NikB and NikC) and a solute-binding protein (NikA).

The protein resides in the cell inner membrane. It catalyses the reaction Ni(2+)(out) + ATP + H2O = Ni(2+)(in) + ADP + phosphate + H(+). Part of the ABC transporter complex NikABCDE involved in nickel import. Responsible for energy coupling to the transport system. The sequence is that of Nickel import ATP-binding protein NikE from Escherichia coli (strain K12).